Here is a 226-residue protein sequence, read N- to C-terminus: Cytidylate kinase (226 aa).

Residue Gly-12–Thr-20 coordinates ATP.

The protein belongs to the cytidylate kinase family. Type 1 subfamily.

The protein resides in the cytoplasm. It catalyses the reaction CMP + ATP = CDP + ADP. The enzyme catalyses dCMP + ATP = dCDP + ADP. This Vibrio parahaemolyticus serotype O3:K6 (strain RIMD 2210633) protein is Cytidylate kinase.